A 664-amino-acid chain; its full sequence is Chaperone protein dnaK1 (664 aa).

A Phosphothreonine; by autocatalysis modification is found at threonine 198.

This sequence belongs to the heat shock protein 70 family.

Acts as a chaperone. The polypeptide is Chaperone protein dnaK1 (dnaK1) (Prochlorococcus marinus (strain MIT 9313)).